Reading from the N-terminus, the 496-residue chain is Glutamate--cysteine ligase B, chloroplastic (496 aa).

The transit peptide at 1–34 (MAVASRLAVARVAPDGGAAGRRRRRRGRPVVAVP) directs the protein to the chloroplast. The interval 14–53 (PDGGAAGRRRRRRGRPVVAVPTAAGRGRGRGGAVAASPPT) is disordered. Residues 29 to 38 (PVVAVPTAAG) show a composition bias toward low complexity. A disulfide bond links C160 and C380.

The protein belongs to the carboxylate-amine ligase family. Glutamate--cysteine ligase type 2 subfamily. As to quaternary structure, homodimer or monomer when oxidized or reduced, respectively. Post-translationally, the Cys-160-Cys-380 disulfide bridge is known to modulate the enzyme activity according to the redox status. The oxidized form constitutes the active enzyme.

The protein localises to the plastid. It is found in the chloroplast. It carries out the reaction L-cysteine + L-glutamate + ATP = gamma-L-glutamyl-L-cysteine + ADP + phosphate + H(+). It functions in the pathway sulfur metabolism; glutathione biosynthesis; glutathione from L-cysteine and L-glutamate: step 1/2. The polypeptide is Glutamate--cysteine ligase B, chloroplastic (GSH1-2) (Oryza sativa subsp. japonica (Rice)).